A 276-amino-acid chain; its full sequence is Large ribosomal subunit protein uL2 (276 aa).

The segment at 218 to 276 is disordered; that stretch reads PYVRGSAMNPVDHPHGGGEGRAPIGRPAPSTPWGKPALGLKTRKKNKKSNKYIVRRRKK. Residues 258–276 show a composition bias toward basic residues; the sequence is KTRKKNKKSNKYIVRRRKK.

It belongs to the universal ribosomal protein uL2 family. Part of the 50S ribosomal subunit. Forms a bridge to the 30S subunit in the 70S ribosome.

Functionally, one of the primary rRNA binding proteins. Required for association of the 30S and 50S subunits to form the 70S ribosome, for tRNA binding and peptide bond formation. It has been suggested to have peptidyltransferase activity; this is somewhat controversial. Makes several contacts with the 16S rRNA in the 70S ribosome. The sequence is that of Large ribosomal subunit protein uL2 from Finegoldia magna (strain ATCC 29328 / DSM 20472 / WAL 2508) (Peptostreptococcus magnus).